A 317-amino-acid chain; its full sequence is Tyrosine--tRNA ligase (317 aa).

Y33 serves as a coordination point for L-tyrosine. Residues 38 to 46 carry the 'HIGH' region motif; sequence PSGKIHMGH. Y155, Q159, D162, and Q177 together coordinate L-tyrosine. Residues 211–215 carry the 'KMSKS' region motif; that stretch reads KMASS. S214 provides a ligand contact to ATP.

It belongs to the class-I aminoacyl-tRNA synthetase family. TyrS type 3 subfamily. Homodimer.

The protein localises to the cytoplasm. The catalysed reaction is tRNA(Tyr) + L-tyrosine + ATP = L-tyrosyl-tRNA(Tyr) + AMP + diphosphate + H(+). Its function is as follows. Catalyzes the attachment of tyrosine to tRNA(Tyr) in a two-step reaction: tyrosine is first activated by ATP to form Tyr-AMP and then transferred to the acceptor end of tRNA(Tyr). This chain is Tyrosine--tRNA ligase, found in Methanosarcina acetivorans (strain ATCC 35395 / DSM 2834 / JCM 12185 / C2A).